Here is a 316-residue protein sequence, read N- to C-terminus: Putative ubiquitin-conjugating enzyme E2 39 (316 aa).

The UBC core domain maps to 57-217; that stretch reads NWVKDIQKEW…VFVFSLKTMH (161 aa). The Glycyl thioester intermediate role is filled by cysteine 143.

This sequence belongs to the ubiquitin-conjugating enzyme family.

The catalysed reaction is S-ubiquitinyl-[E1 ubiquitin-activating enzyme]-L-cysteine + [E2 ubiquitin-conjugating enzyme]-L-cysteine = [E1 ubiquitin-activating enzyme]-L-cysteine + S-ubiquitinyl-[E2 ubiquitin-conjugating enzyme]-L-cysteine.. It functions in the pathway protein modification; protein ubiquitination. Functionally, accepts the ubiquitin from the E1 complex and catalyzes its covalent attachment to other proteins. The protein is Putative ubiquitin-conjugating enzyme E2 39 (UBC39) of Arabidopsis thaliana (Mouse-ear cress).